A 295-amino-acid chain; its full sequence is Small ribosomal subunit protein uS2 (295 aa).

Ser-2 is modified (N-acetylserine). Position 43 is a phosphoserine (Ser-43). The residue at position 52 (Lys-52) is an N6-acetyllysine. Positions 54–113 (TWEKLLLAARAIVAIENPADVSVISSRNTGQRAVLKFAAATGATPIAGRFTPGTFTNQIQ) are interaction with PPP1R16B. Lys-89 is subject to N6-acetyllysine; alternate. Residue Lys-89 forms a Glycyl lysine isopeptide (Lys-Gly) (interchain with G-Cter in SUMO2); alternate linkage. Thr-97 is modified (phosphothreonine). 2 laminin-binding regions span residues 161-180 (IPCN…MLAR) and 205-229 (RDPE…EFQG). The segment covering 214 to 227 (EQAAAEKAVTKEEF) has biased composition (basic and acidic residues). Positions 214-240 (EQAAAEKAVTKEEFQGEWTAPAPEFTA) are disordered. 4 [DE]-W-[ST] repeats span residues 230–232 (EWT), 247–249 (DWS), 266–268 (DWS), and 275–277 (DWS). The laminin-binding stretch occupies residues 242-295 (QPEVADWSEGVQVPSVPIQQFPTEDWSARPFTEDWSAAPTAQATEWVGTTSELS). Residues 263-295 (PTEDWSARPFTEDWSAAPTAQATEWVGTTSELS) form a disordered region. A compositionally biased stretch (polar residues) spans 280–295 (PTAQATEWVGTTSELS).

The protein belongs to the universal ribosomal protein uS2 family. Monomer (37LRP) and homodimer (67LR). Component of the small ribosomal subunit. Mature ribosomes consist of a small (40S) and a large (60S) subunit. The 40S subunit contains about 33 different proteins and 1 molecule of RNA (18S). The 60S subunit contains about 49 different proteins and 3 molecules of RNA (28S, 5.8S and 5S). Interacts with RPS21. Interacts with several laminins including at least LAMB1. Interacts with MDK. The mature dimeric form interacts with PPP1R16B (via its fourth ankyrin repeat). Interacts with PPP1CA only in the presence of PPP1R16B. Post-translationally, acylated. Acylation may be a prerequisite for conversion of the monomeric 37 kDa laminin receptor precursor (37LRP) to the mature dimeric 67 kDa laminin receptor (67LR), and may provide a mechanism for membrane association. In terms of processing, cleaved by stromelysin-3 (ST3) at the cell surface. Cleavage by stromelysin-3 may be a mechanism to alter cell-extracellular matrix interactions.

It is found in the cell membrane. It localises to the cytoplasm. The protein localises to the nucleus. Functionally, required for the assembly and/or stability of the 40S ribosomal subunit. Required for the processing of the 20S rRNA-precursor to mature 18S rRNA in a late step of the maturation of 40S ribosomal subunits. Also functions as a cell surface receptor for laminin. Plays a role in cell adhesion to the basement membrane and in the consequent activation of signaling transduction pathways. May play a role in cell fate determination and tissue morphogenesis. Also acts as a receptor for several other ligands, including the pathogenic prion protein, viruses, and bacteria. Acts as a PPP1R16B-dependent substrate of PPP1CA. The polypeptide is Small ribosomal subunit protein uS2 (Ovis aries (Sheep)).